A 94-amino-acid chain; its full sequence is Integration host factor subunit beta (94 aa).

Belongs to the bacterial histone-like protein family. In terms of assembly, heterodimer of an alpha and a beta chain.

Functionally, this protein is one of the two subunits of integration host factor, a specific DNA-binding protein that functions in genetic recombination as well as in transcriptional and translational control. The chain is Integration host factor subunit beta (ihfB) from Serratia marcescens.